The sequence spans 116 residues: Large ribosomal subunit protein uL22 (116 aa).

Belongs to the universal ribosomal protein uL22 family. As to quaternary structure, part of the 50S ribosomal subunit.

Functionally, this protein binds specifically to 23S rRNA; its binding is stimulated by other ribosomal proteins, e.g. L4, L17, and L20. It is important during the early stages of 50S assembly. It makes multiple contacts with different domains of the 23S rRNA in the assembled 50S subunit and ribosome. The globular domain of the protein is located near the polypeptide exit tunnel on the outside of the subunit, while an extended beta-hairpin is found that lines the wall of the exit tunnel in the center of the 70S ribosome. The protein is Large ribosomal subunit protein uL22 of Wolbachia pipientis subsp. Culex pipiens (strain wPip).